Reading from the N-terminus, the 516-residue chain is Cytochrome P450 6d1 (516 aa).

Cys461 contacts heme.

It belongs to the cytochrome P450 family. The cofactor is heme.

Its subcellular location is the endoplasmic reticulum membrane. It is found in the microsome membrane. Metabolizes pyrethroid insecticides and other xenobiotics. In Musca domestica (House fly), this protein is Cytochrome P450 6d1 (CYP6D1).